The primary structure comprises 156 residues: Small ribosomal subunit protein uS7 (156 aa).

It belongs to the universal ribosomal protein uS7 family. In terms of assembly, part of the 30S ribosomal subunit. Contacts proteins S9 and S11.

In terms of biological role, one of the primary rRNA binding proteins, it binds directly to 16S rRNA where it nucleates assembly of the head domain of the 30S subunit. Is located at the subunit interface close to the decoding center, probably blocks exit of the E-site tRNA. This Geobacter sulfurreducens (strain ATCC 51573 / DSM 12127 / PCA) protein is Small ribosomal subunit protein uS7.